The chain runs to 282 residues: Putative phosphatase MPN_383 (282 aa).

Asp-11 functions as the Nucleophile in the catalytic mechanism. A Mg(2+)-binding site is contributed by Asp-11. Phosphate is bound at residue Leu-12. Asp-13 is a binding site for Mg(2+). Phosphate contacts are provided by residues 45–46 (TG) and Lys-207. Residue Asp-230 participates in Mg(2+) binding. Position 233 (Asn-233) interacts with phosphate.

Belongs to the HAD-like hydrolase superfamily. Cof family. Requires Mg(2+) as cofactor.

The polypeptide is Putative phosphatase MPN_383 (Mycoplasma pneumoniae (strain ATCC 29342 / M129 / Subtype 1) (Mycoplasmoides pneumoniae)).